A 498-amino-acid chain; its full sequence is Probable malate:quinone oxidoreductase 2 (498 aa).

Belongs to the MQO family. FAD serves as cofactor.

It carries out the reaction (S)-malate + a quinone = a quinol + oxaloacetate. It participates in carbohydrate metabolism; tricarboxylic acid cycle; oxaloacetate from (S)-malate (quinone route): step 1/1. The sequence is that of Probable malate:quinone oxidoreductase 2 from Staphylococcus aureus (strain MW2).